We begin with the raw amino-acid sequence, 391 residues long: UDP-galactose transporter homolog 1 (391 aa).

The next 5 membrane-spanning stretches (helical) occupy residues 3-23 (LLQL…WGLL), 52-72 (LFLN…YLLV), 126-147 (YILI…LRYI), 178-198 (YKYA…AFAP), and 207-227 (APES…VLDG). An N-linked (GlcNAc...) asparagine glycan is attached at N230. Helical transmembrane passes span 250 to 270 (MMLV…TLPI), 298 to 318 (DIIA…ETLE), 323 to 343 (LTLV…SVVV), and 347 to 367 (ELSK…GIEA).

Belongs to the nucleotide-sugar transporter family. SLC35B subfamily.

It is found in the endoplasmic reticulum membrane. Its function is as follows. May be involved in specific transport of UDP-Gal from the cytosol to the Golgi lumen. Involved in the maintenance of optimal conditions for the folding of secretory pathway proteins in the endoplasmic reticulum. The protein is UDP-galactose transporter homolog 1 (HUT1) of Mycosarcoma maydis (Corn smut fungus).